The primary structure comprises 31 residues: GSIPCGESCVYIPCITSIVGCSCKSKVCYKN.

3 cysteine pairs are disulfide-bonded: Cys5/Cys21, Cys9/Cys23, and Cys14/Cys28.

In terms of processing, this is a cyclic peptide. Contains 3 disulfide bonds.

Its function is as follows. Probably participates in a plant defense mechanism. This chain is Cyclotide mra3, found in Melicytus ramiflorus (Whitey wood).